The sequence spans 226 residues: Phosphoheptose isomerase (226 aa).

The 163-residue stretch at 50-212 (IAGVFETGGK…ERMMGYGTEC (163 aa)) folds into the SIS domain. 65-67 (NGG) provides a ligand contact to substrate. Zn(2+) is bound by residues H74 and E78. Substrate is bound by residues E78, 109–110 (ND), 135–137 (STS), S140, and Q188. Q188 and H196 together coordinate Zn(2+).

Belongs to the SIS family. GmhA subfamily. Zn(2+) is required as a cofactor.

The protein localises to the cytoplasm. The catalysed reaction is 2 D-sedoheptulose 7-phosphate = D-glycero-alpha-D-manno-heptose 7-phosphate + D-glycero-beta-D-manno-heptose 7-phosphate. It participates in carbohydrate biosynthesis; D-glycero-D-manno-heptose 7-phosphate biosynthesis; D-glycero-alpha-D-manno-heptose 7-phosphate and D-glycero-beta-D-manno-heptose 7-phosphate from sedoheptulose 7-phosphate: step 1/1. Functionally, catalyzes the isomerization of sedoheptulose 7-phosphate in D-glycero-D-manno-heptose 7-phosphate. The chain is Phosphoheptose isomerase from Chlorobium phaeobacteroides (strain DSM 266 / SMG 266 / 2430).